Consider the following 165-residue polypeptide: Small ribosomal subunit protein uS5 (165 aa).

Positions Leu13–Val76 constitute an S5 DRBM domain.

This sequence belongs to the universal ribosomal protein uS5 family. Part of the 30S ribosomal subunit. Contacts proteins S4 and S8.

Functionally, with S4 and S12 plays an important role in translational accuracy. Located at the back of the 30S subunit body where it stabilizes the conformation of the head with respect to the body. The protein is Small ribosomal subunit protein uS5 of Oenococcus oeni (strain ATCC BAA-331 / PSU-1).